We begin with the raw amino-acid sequence, 610 residues long: Elongation factor 4 (610 aa).

One can recognise a tr-type G domain in the interval 11 to 193 (EKIRNFSIIA…QIVEKVPAPT (183 aa)). GTP is bound by residues 23 to 28 (DHGKST) and 140 to 143 (NKID).

This sequence belongs to the TRAFAC class translation factor GTPase superfamily. Classic translation factor GTPase family. LepA subfamily.

The protein resides in the cell membrane. The enzyme catalyses GTP + H2O = GDP + phosphate + H(+). Its function is as follows. Required for accurate and efficient protein synthesis under certain stress conditions. May act as a fidelity factor of the translation reaction, by catalyzing a one-codon backward translocation of tRNAs on improperly translocated ribosomes. Back-translocation proceeds from a post-translocation (POST) complex to a pre-translocation (PRE) complex, thus giving elongation factor G a second chance to translocate the tRNAs correctly. Binds to ribosomes in a GTP-dependent manner. This Streptococcus agalactiae serotype Ia (strain ATCC 27591 / A909 / CDC SS700) protein is Elongation factor 4.